The chain runs to 111 residues: Nucleoid-associated protein PputW619_3586 (111 aa).

The interval 87-111 (EQSSQEKMGGMTAGMQLPPGFKMPF) is disordered.

The protein belongs to the YbaB/EbfC family. Homodimer.

It is found in the cytoplasm. It localises to the nucleoid. Functionally, binds to DNA and alters its conformation. May be involved in regulation of gene expression, nucleoid organization and DNA protection. This chain is Nucleoid-associated protein PputW619_3586, found in Pseudomonas putida (strain W619).